The primary structure comprises 209 residues: Regulator of G-protein signaling 1 (209 aa).

The disordered stretch occupies residues 19-42 (FSASPKDSKEHSHSLLDDKKQKKR). Positions 24 to 38 (KDSKEHSHSLLDDKK) are enriched in basic and acidic residues. The RGS domain maps to 85–200 (SLEKLLANQT…LKSNIYLNLL (116 aa)).

In terms of assembly, interacts with GNAI1 and GNAQ. Detected in spleen, lymph node and intestine.

It is found in the cell membrane. The protein resides in the cytoplasm. The protein localises to the cytosol. Functionally, regulates G protein-coupled receptor signaling cascades, including signaling downstream of the N-formylpeptide chemoattractant receptors and leukotriene receptors. Inhibits B cell chemotaxis toward CXCL12. Inhibits signal transduction by increasing the GTPase activity of G protein alpha subunits thereby driving them into their inactive GDP-bound form. This Mus musculus (Mouse) protein is Regulator of G-protein signaling 1 (Rgs1).